The sequence spans 380 residues: Queuine tRNA-ribosyltransferase (380 aa).

The active-site Proton acceptor is the aspartate 93. Substrate-binding positions include 93-97 (DSGGF), aspartate 147, glutamine 198, and glycine 225. The tract at residues 256–262 (GVGLPSN) is RNA binding. The active-site Nucleophile is aspartate 275. An RNA binding; important for wobble base 34 recognition region spans residues 280–284 (ARNGR). Zn(2+)-binding residues include cysteine 313, cysteine 315, cysteine 318, and histidine 344.

It belongs to the queuine tRNA-ribosyltransferase family. In terms of assembly, homodimer. Within each dimer, one monomer is responsible for RNA recognition and catalysis, while the other monomer binds to the replacement base PreQ1. Zn(2+) serves as cofactor.

It carries out the reaction 7-aminomethyl-7-carbaguanine + guanosine(34) in tRNA = 7-aminomethyl-7-carbaguanosine(34) in tRNA + guanine. Its pathway is tRNA modification; tRNA-queuosine biosynthesis. Its function is as follows. Catalyzes the base-exchange of a guanine (G) residue with the queuine precursor 7-aminomethyl-7-deazaguanine (PreQ1) at position 34 (anticodon wobble position) in tRNAs with GU(N) anticodons (tRNA-Asp, -Asn, -His and -Tyr). Catalysis occurs through a double-displacement mechanism. The nucleophile active site attacks the C1' of nucleotide 34 to detach the guanine base from the RNA, forming a covalent enzyme-RNA intermediate. The proton acceptor active site deprotonates the incoming PreQ1, allowing a nucleophilic attack on the C1' of the ribose to form the product. After dissociation, two additional enzymatic reactions on the tRNA convert PreQ1 to queuine (Q), resulting in the hypermodified nucleoside queuosine (7-(((4,5-cis-dihydroxy-2-cyclopenten-1-yl)amino)methyl)-7-deazaguanosine). The polypeptide is Queuine tRNA-ribosyltransferase (Clostridium perfringens (strain 13 / Type A)).